The sequence spans 222 residues: Exosome complex component Rrp4 (222 aa).

Positions 63–131 (NDSVIGKVVD…EVKKVKLGLH (69 aa)) constitute an S1 motif domain. In terms of domain architecture, KH spans 139–200 (EGGTLAYITP…EIVKRALEMI (62 aa)).

Belongs to the RRP4 family. In terms of assembly, component of the archaeal exosome complex. Forms a trimer of Rrp4 and/or Csl4 subunits. The trimer associates with a hexameric ring-like arrangement composed of 3 Rrp41-Rrp42 heterodimers.

The protein localises to the cytoplasm. In terms of biological role, non-catalytic component of the exosome, which is a complex involved in RNA degradation. Increases the RNA binding and the efficiency of RNA degradation. Confers strong poly(A) specificity to the exosome. This is Exosome complex component Rrp4 from Methanothermus fervidus (strain ATCC 43054 / DSM 2088 / JCM 10308 / V24 S).